We begin with the raw amino-acid sequence, 433 residues long: 26S proteasome regulatory subunit 7 (433 aa).

A disordered region spans residues 1–22 (MPDYLGADQRKTKEDEKDDKPI). Residues 8–22 (DQRKTKEDEKDDKPI) show a composition bias toward basic and acidic residues. Lysine 116 is subject to N6-acetyllysine. Residue 216–223 (GPPGTGKT) coordinates ATP. N6-acetyllysine is present on lysine 422.

This sequence belongs to the AAA ATPase family. As to quaternary structure, component of the 19S proteasome regulatory particle complex. The 26S proteasome consists of a 20S core particle (CP) and two 19S regulatory subunits (RP). The regulatory particle is made of a lid composed of 9 subunits, a base containing 6 ATPases including PSMC2 and few additional components. Interacts with NDC80/HEC; this interaction is detected only during M phase. Interacts and SQSTM1. Interacts with PAAF1. Directly interacts with TRIM5. In terms of processing, monoubiquitinated by RNF181. Phosphorylated. Dephosphorylated by UBLCP1 which impairs PSMC2 ATPase activity and disrupts 26S proteasome assembly.

It is found in the cytoplasm. The protein resides in the nucleus. Component of the 26S proteasome, a multiprotein complex involved in the ATP-dependent degradation of ubiquitinated proteins. This complex plays a key role in the maintenance of protein homeostasis by removing misfolded or damaged proteins, which could impair cellular functions, and by removing proteins whose functions are no longer required. Therefore, the proteasome participates in numerous cellular processes, including cell cycle progression, apoptosis, or DNA damage repair. PSMC2 belongs to the heterohexameric ring of AAA (ATPases associated with diverse cellular activities) proteins that unfolds ubiquitinated target proteins that are concurrently translocated into a proteolytic chamber and degraded into peptides. The protein is 26S proteasome regulatory subunit 7 (PSMC2) of Bos taurus (Bovine).